We begin with the raw amino-acid sequence, 461 residues long: Bifunctional protein HldE (461 aa).

The tract at residues 1–312 (MLEFLSQQKP…IKSFNRVDFE (312 aa)) is ribokinase. ATP is bound at residue 191–194 (NKKE). The active site involves D259. The tract at residues 334–461 (FTNGCFDIVH…KIIEKIKDKK (128 aa)) is cytidylyltransferase.

This sequence in the N-terminal section; belongs to the carbohydrate kinase PfkB family. The protein in the C-terminal section; belongs to the cytidylyltransferase family. As to quaternary structure, homodimer.

It catalyses the reaction D-glycero-beta-D-manno-heptose 7-phosphate + ATP = D-glycero-beta-D-manno-heptose 1,7-bisphosphate + ADP + H(+). The enzyme catalyses D-glycero-beta-D-manno-heptose 1-phosphate + ATP + H(+) = ADP-D-glycero-beta-D-manno-heptose + diphosphate. It participates in nucleotide-sugar biosynthesis; ADP-L-glycero-beta-D-manno-heptose biosynthesis; ADP-L-glycero-beta-D-manno-heptose from D-glycero-beta-D-manno-heptose 7-phosphate: step 1/4. Its pathway is nucleotide-sugar biosynthesis; ADP-L-glycero-beta-D-manno-heptose biosynthesis; ADP-L-glycero-beta-D-manno-heptose from D-glycero-beta-D-manno-heptose 7-phosphate: step 3/4. Its function is as follows. Catalyzes the phosphorylation of D-glycero-D-manno-heptose 7-phosphate at the C-1 position to selectively form D-glycero-beta-D-manno-heptose-1,7-bisphosphate. Functionally, catalyzes the ADP transfer from ATP to D-glycero-beta-D-manno-heptose 1-phosphate, yielding ADP-D-glycero-beta-D-manno-heptose. This Campylobacter jejuni subsp. doylei (strain ATCC BAA-1458 / RM4099 / 269.97) protein is Bifunctional protein HldE.